The chain runs to 329 residues: DNA-directed RNA polymerase subunit alpha (329 aa).

The alpha N-terminal domain (alpha-NTD) stretch occupies residues 1-235 (MQGSVTEFLK…EQLEAFVDLR (235 aa)). Residues 249–329 (FDPILLRPVD…NWPPASIADE (81 aa)) form an alpha C-terminal domain (alpha-CTD) region.

This sequence belongs to the RNA polymerase alpha chain family. Homodimer. The RNAP catalytic core consists of 2 alpha, 1 beta, 1 beta' and 1 omega subunit. When a sigma factor is associated with the core the holoenzyme is formed, which can initiate transcription.

It catalyses the reaction RNA(n) + a ribonucleoside 5'-triphosphate = RNA(n+1) + diphosphate. Its function is as follows. DNA-dependent RNA polymerase catalyzes the transcription of DNA into RNA using the four ribonucleoside triphosphates as substrates. The sequence is that of DNA-directed RNA polymerase subunit alpha from Photorhabdus laumondii subsp. laumondii (strain DSM 15139 / CIP 105565 / TT01) (Photorhabdus luminescens subsp. laumondii).